A 780-amino-acid chain; its full sequence is ATPase family gene 2 protein (780 aa).

Low complexity predominate over residues 1 to 23 (MAPKSSSSGSKKKSSASSNSADA). The disordered stretch occupies residues 1 to 26 (MAPKSSSSGSKKKSSASSNSADAKAS). ATP is bound by residues 286-293 (GPPGTGKT) and 557-564 (GPPGCSKT).

The protein belongs to the AAA ATPase family. AFG2 subfamily. As to quaternary structure, homohexamer; ATP binding induces oligomerization. Forms a ring-shaped particle of about 12 nm diameter, that displays 6-fold radial symmetry. Associates with cytoplasmic pre-60S ribosomal particles containing ARX1, ALB1, RLP24 and NOG1. Binds to pre-60S ribosomal particles soon after their export from the nucleus and is released before REI1 and LSG1 are incorporated into the particles. Hexameric form interacts with RLP24 (via C-terminal); the interaction recruits AFG2 to pre-60S ribosomal particles and promotes AFG2 ATPase activity and RLP24 release from pre-60S ribosomal particles. Interacts (via N-terminus) with nucleoporin NUP116 (via N-terminus); the interaction is required for RLP24 release from pre-60S ribosomal particles.

The protein localises to the cytoplasm. The catalysed reaction is ATP + H2O = ADP + phosphate + H(+). The hexamer is activated by RLP24 during pre-60S ribosomal particle maturation; RLP24 activates ATPase activity of both ATP-binding regions and increases cooperativity between AFG2 subunits. The second ATP-binding region is inhibited by diazaborine; the inhibition requires prior ATP binding specifically to the second ATP-binding region. In terms of biological role, ATP-dependent chaperone which uses the energy provided by ATP hydrolysis to generate mechanical force to disassemble protein complexes. Plays an essential role in the cytoplasmic maturation steps of pre-60S ribosomal particles by promoting the release of shuttling protein RLP24 from the pre-ribosomal particles. This step facilitates the subsequent release of other shuttling proteins such as NOG1 and allows the transition of the pre-ribosomal particles to later maturation forms that bind REI1. Essential for viability. This is ATPase family gene 2 protein from Saccharomyces cerevisiae (strain ATCC 204508 / S288c) (Baker's yeast).